The sequence spans 189 residues: Small ribosomal subunit protein uS7 (189 aa).

This sequence belongs to the universal ribosomal protein uS7 family. In terms of assembly, component of the small ribosomal subunit.

The protein resides in the cytoplasm. In Encephalitozoon cuniculi (strain GB-M1) (Microsporidian parasite), this protein is Small ribosomal subunit protein uS7 (RPS5).